Here is an 85-residue protein sequence, read N- to C-terminus: MAHKKAGGSTRNGRDSRGKRLGVKHFGGEIISAGTIIVRQRGNKFHPGKYVGCGRDHTLFALQSGKLLFEKKGKLQRRLVSIIVE.

The interval Met1–Leu21 is disordered.

Belongs to the bacterial ribosomal protein bL27 family.

The sequence is that of Large ribosomal subunit protein bL27 from Blochmanniella floridana.